The primary structure comprises 445 residues: Argininosuccinate synthase (445 aa).

Residues 17–25 (AFSGGLDTS) and alanine 43 each bind ATP. Residue tyrosine 99 participates in L-citrulline binding. The ATP site is built by glycine 129 and threonine 131. Residues threonine 131, asparagine 135, and aspartate 136 each coordinate L-aspartate. Residue asparagine 135 participates in L-citrulline binding. Residue aspartate 136 participates in ATP binding. The L-citrulline site is built by arginine 139 and serine 192. An ATP-binding site is contributed by aspartate 194. Threonine 201, glutamate 203, and glutamate 280 together coordinate L-citrulline.

The protein belongs to the argininosuccinate synthase family. Type 2 subfamily. In terms of assembly, homotetramer.

It is found in the cytoplasm. The enzyme catalyses L-citrulline + L-aspartate + ATP = 2-(N(omega)-L-arginino)succinate + AMP + diphosphate + H(+). The protein operates within amino-acid biosynthesis; L-arginine biosynthesis; L-arginine from L-ornithine and carbamoyl phosphate: step 2/3. In Rhodopseudomonas palustris (strain BisB18), this protein is Argininosuccinate synthase.